The following is a 529-amino-acid chain: CTP synthase (529 aa).

The tract at residues 1 to 267 (MKEAKFIFVT…DTQILEHFHL (267 aa)) is amidoligase domain. Position 15 (serine 15) interacts with CTP. Residue serine 15 coordinates UTP. ATP is bound by residues 16 to 21 (SLGKGL) and aspartate 73. 2 residues coordinate Mg(2+): aspartate 73 and glutamate 141. CTP is bound by residues 148–150 (DIE), 188–193 (KTKPTQ), and lysine 224. UTP contacts are provided by residues 188–193 (KTKPTQ) and lysine 224. In terms of domain architecture, Glutamine amidotransferase type-1 spans 292–529 (TVSIVGKYTE…SFVKAAIDKK (238 aa)). Glycine 354 provides a ligand contact to L-glutamine. Cysteine 381 functions as the Nucleophile; for glutamine hydrolysis in the catalytic mechanism. L-glutamine-binding positions include 382–385 (LGMQ), glutamate 405, and arginine 459. Active-site residues include histidine 504 and glutamate 506.

Belongs to the CTP synthase family. In terms of assembly, homotetramer.

It catalyses the reaction UTP + L-glutamine + ATP + H2O = CTP + L-glutamate + ADP + phosphate + 2 H(+). It carries out the reaction L-glutamine + H2O = L-glutamate + NH4(+). The enzyme catalyses UTP + NH4(+) + ATP = CTP + ADP + phosphate + 2 H(+). The protein operates within pyrimidine metabolism; CTP biosynthesis via de novo pathway; CTP from UDP: step 2/2. Its activity is regulated as follows. Allosterically activated by GTP, when glutamine is the substrate; GTP has no effect on the reaction when ammonia is the substrate. The allosteric effector GTP functions by stabilizing the protein conformation that binds the tetrahedral intermediate(s) formed during glutamine hydrolysis. Inhibited by the product CTP, via allosteric rather than competitive inhibition. In terms of biological role, catalyzes the ATP-dependent amination of UTP to CTP with either L-glutamine or ammonia as the source of nitrogen. Regulates intracellular CTP levels through interactions with the four ribonucleotide triphosphates. The polypeptide is CTP synthase (Wolbachia pipientis wMel).